A 251-amino-acid chain; its full sequence is MRMLPDFFTGNWDDMFQGLLEAEHPFDFPEPSQAFEEISLHNLFDVELDESEGDPNEEAVDGMFPNWMLSEDHSADSGAASGDSGVGEDLVEVNLDLKCYEEGLPPSGSEADEAEERAEEEETAVSNYVNIAEGASQLVLDCPENPGRGCRACDFHRGSSGNPEAMCALCYMRLTGHCIYSPISDAEGECELGSNEETELPCSLTATAPVRPTPCRVSCRRRPAVDCIEDLLEEDPTDEPLNLSLKRPKSS.

An interaction with RB1 in competition with E2F1 region spans residues 38-46 (ISLHNLFDV). Residues 74–136 (SADSGAASGD…NYVNIAEGAS (63 aa)) form an interaction with UBE2I region. The LXCXE motif, interaction with host RB1 and TMEM173/STING motif lies at 97-101 (LKCYE). The tract at residues 102 to 122 (EGLPPSGSEADEAEERAEEEE) is disordered. Acidic residues predominate over residues 110-122 (EADEAEERAEEEE). Residues 150-170 (CRACDFHRGSSGNPEAMCALC) fold into a zinc finger. Positions 240 to 244 (PLNLS) match the PXDLS motif, CTBP-binding motif. A Nuclear localization signal motif is present at residues 246 to 250 (KRPKS).

Belongs to the adenoviridae E1A protein family. Interacts with host UBE2I; this interaction interferes with polySUMOylation. Interacts with host RB1; this interaction induces the aberrant dissociation of RB1-E2F1 complex thereby disrupting the activity of RB1 and activating E2F1-regulated genes. Interacts with host ATF7; the interaction enhances ATF7-mediated viral transactivation activity which requires the zinc binding domains of both proteins. Isoform early E1A 32 kDa protein and isoform early E1A 26 kDa protein interact (via N-terminus) with CUL1 and E3 ubiquitin ligase RBX1; these interactions inhibit RBX1-CUL1-dependent elongation reaction of ubiquitin chains and attenuate ubiquitination of SCF(FBXW7) target proteins. Interacts (via PXLXP motif) with host ZMYND11/BS69 (via MYND-type zinc finger); this interaction inhibits E1A mediated transactivation. Interacts with host EP300; this interaction stimulates the acetylation of RB1 by recruiting EP300 and RB1 into a multimeric-protein complex. Interacts with host CTBP1 and CTBP2; this interaction seems to potentiate viral replication. Interacts with host DCAF7. Interacts with host DYRK1A. Interacts with host KPNA4; this interaction allows E1A import into the host nucleus. Interacts with host EP400; this interaction stabilizes MYC. Interacts with host TBP protein; this interaction probably disrupts the TBP-TATA complex. Interacts (via LXCXE motif) with host TMEM173/STING; this interaction impairs the ability of TMEM173/STING to sense cytosolic DNA and promote the production of type I interferon (IFN-alpha and IFN-beta). Interacts (via C-terminus) with host ZBED1/hDREF (via C-terminus); the interaction is direct.

Its subcellular location is the host nucleus. Plays a role in viral genome replication by driving entry of quiescent cells into the cell cycle. Stimulation of progression from G1 to S phase allows the virus to efficiently use the cellular DNA replicating machinery to achieve viral genome replication. E1A protein has both transforming and trans-activating activities. Induces the disassembly of the E2F1 transcription factor from RB1 by direct competition for the same binding site on RB1, with subsequent transcriptional activation of E2F1-regulated S-phase genes and of the E2 region of the adenoviral genome. Release of E2F1 leads to the ARF-mediated inhibition of MDM2 and causes TP53/p53 to accumulate because it is not targeted for degradation by MDM2-mediated ubiquitination anymore. This increase in TP53, in turn, would arrest the cell proliferation and direct its death but this effect is counteracted by the viral protein E1B-55K. Inactivation of the ability of RB1 to arrest the cell cycle is critical for cellular transformation, uncontrolled cellular growth and proliferation induced by viral infection. Interaction with RBX1 and CUL1 inhibits ubiquitination of the proteins targeted by SCF(FBXW7) ubiquitin ligase complex, and may be linked to unregulated host cell proliferation. The tumorigenesis-restraining activity of E1A may be related to the disruption of the host CtBP-CtIP complex through the CtBP binding motif. Interaction with host TMEM173/STING impairs the ability of TMEM173/STING to sense cytosolic DNA and promote the production of type I interferon (IFN-alpha and IFN-beta). Promotes the sumoylation of host ZBED1/hDREF with SUMO1. The protein is Early E1A protein of Human adenovirus F serotype 41 (HAdV-41).